The following is a 481-amino-acid chain: Cardiolipin synthase A (481 aa).

2 consecutive transmembrane segments (helical) span residues 10–30 (FFGYLLGLIHLLGVVAALHAL) and 40–60 (IAWAMPLFFIPYLTLIPYLIF). PLD phosphodiesterase domains are found at residues 220–247 (VNFRNHRKIVVVDGLLGFIGGHNVGDEY) and 394–421 (QPGFLHQKVVLVDDEVSAIGSANLDNRS). Active-site residues include H225, K227, D232, H399, K401, and D406.

Belongs to the phospholipase D family. Cardiolipin synthase subfamily. ClsA sub-subfamily.

The protein localises to the cell inner membrane. The enzyme catalyses 2 a 1,2-diacyl-sn-glycero-3-phospho-(1'-sn-glycerol) = a cardiolipin + glycerol. Its function is as follows. Catalyzes the reversible phosphatidyl group transfer from one phosphatidylglycerol molecule to another to form cardiolipin (CL) (diphosphatidylglycerol) and glycerol. This chain is Cardiolipin synthase A, found in Pseudomonas putida (Arthrobacter siderocapsulatus).